Reading from the N-terminus, the 1103-residue chain is Ubiquitin carboxyl-terminal hydrolase 7 (1103 aa).

Low complexity predominate over residues 1 to 11 (MNHQQQQQQQQ). Disordered stretches follow at residues 1 to 41 (MNHQ…TQNP) and 46 to 65 (NVTLSDGHSNAEEDMEDDTS). An interaction with TSPYL5 region spans residues 1–209 (MNHQQQQQQQ…APHGVAWDSK (209 aa)). A Phosphoserine modification is found at Ser-19. The span at 20-32 (EPEDMEMEAGDTD) shows a compositional bias: acidic residues. Phosphoserine occurs at positions 50 and 54. An interaction with p53/TP53 and MDM2 region spans residues 54–209 (SNAEEDMEDD…APHGVAWDSK (156 aa)). Positions 69-196 (EATFQFTVER…DDKVTFEVFV (128 aa)) constitute an MATH domain. The interval 71-206 (TFQFTVERFS…QADAPHGVAW (136 aa)) is necessary for nuclear localization. Residues 215 to 522 (VGLKNQGATC…NAYMLVYIRE (308 aa)) enclose the USP domain. The Nucleophile role is filled by Cys-224. The Proton acceptor role is filled by His-465. The residue at position 870 (Lys-870) is an N6-acetyllysine; alternate. Lys-870 is covalently cross-linked (Glycyl lysine isopeptide (Lys-Gly) (interchain with G-Cter in SUMO2); alternate). A Glycyl lysine isopeptide (Lys-Gly) (interchain with G-Cter in ubiquitin); alternate cross-link involves residue Lys-870. Lys-883 is covalently cross-linked (Glycyl lysine isopeptide (Lys-Gly) (interchain with G-Cter in SUMO2)). At Ser-964 the chain carries Phosphoserine. 2 positions are modified to N6-acetyllysine: Lys-1085 and Lys-1097.

It belongs to the peptidase C19 family. Monomer. Homodimer. Part of a complex with DAXX, MDM2, RASSF1 and USP7. Part of a complex with DAXX, MDM2 and USP7. Interacts with MDM2; the interaction is independent of p53/TP53. Interacts with DAXX; the interaction is direct and independent of MDM2 and p53/TP53. Component of a complex composed of KMT2E, OGT and USP7; the complex stabilizes KMT2E, preventing KMT2E ubiquitination and proteasomal-mediated degradation. Interacts (via MATH domain) with KMT2E. Interacts with OGT. Interacts with FOXO4; the interaction is enhanced in presence of hydrogen peroxide and occurs independently of p53/TP53. Interacts with p53/TP53; the interaction is enhanced in response to DNA damage; the interaction is impaired by TSPYL5. Interacts with PTEN; the interaction is direct. Interacts with ATXN1 and the strength of interaction is influenced by the length of the poly-Gln region in ATXN1. A weaker interaction seen with mutants having longer poly-Gln regions. Interacts with KIAA1530/UVSSA. Interacts with MEX3C and antagonizes its ability to degrade mRNA. Interacts with DNMT1 and UHRF1. Interacts with FOXP3. Interacts (via MATH domain) with RNF220. Associated component of the Polycomb group (PcG) multiprotein PRC1-like complex. Interacts with EPOP. Interacts with OTUD4 and USP9X; the interaction is direct. Interacts with CRY2. Interacts with REST. Interacts with ERCC6. Part of a complex consisting of USP7, MAGEL2 and TRIM27; directly interacts with MAGEL2; directly interacts with TRIM27. Post-translationally, polyneddylated. Not sumoylated. In terms of processing, polyubiquitinated. Ubiquitinated at Lys-870. In terms of tissue distribution, widely expressed. High expression is detected in brain, bone marrow, thymus and testis.

It is found in the nucleus. The protein resides in the cytoplasm. Its subcellular location is the PML body. It localises to the chromosome. The catalysed reaction is Thiol-dependent hydrolysis of ester, thioester, amide, peptide and isopeptide bonds formed by the C-terminal Gly of ubiquitin (a 76-residue protein attached to proteins as an intracellular targeting signal).. In terms of biological role, hydrolase that deubiquitinates target proteins such as ARMC5, FOXO4, DEPTOR, KAT5, p53/TP53, MDM2, ERCC6, DNMT1, UHRF1, PTEN, KMT2E/MLL5 and DAXX. Together with DAXX, prevents MDM2 self-ubiquitination and enhances the E3 ligase activity of MDM2 towards p53/TP53, thereby promoting p53/TP53 ubiquitination and proteasomal degradation. Deubiquitinates p53/TP53, preventing degradation of p53/TP53, and enhances p53/TP53-dependent transcription regulation, cell growth repression and apoptosis. Deubiquitinates p53/TP53 and MDM2 and strongly stabilizes p53/TP53 even in the presence of excess MDM2, and also induces p53/TP53-dependent cell growth repression and apoptosis. Deubiquitination of FOXO4 in presence of hydrogen peroxide is not dependent on p53/TP53 and inhibits FOXO4-induced transcriptional activity. In association with DAXX, is involved in the deubiquitination and translocation of PTEN from the nucleus to the cytoplasm, both processes that are counteracted by PML. Deubiquitinates KMT2E preventing KMT2E proteasomal-mediated degradation. Involved in cell proliferation during early embryonic development. Involved in transcription-coupled nucleotide excision repair (TC-NER) in response to UV damage: recruited to DNA damage sites following interaction with KIAA1530/UVSSA and promotes deubiquitination of ERCC6, preventing UV-induced degradation of ERCC6. Involved in maintenance of DNA methylation via its interaction with UHRF1 and DNMT1: acts by mediating deubiquitination of UHRF1 and DNMT1, preventing their degradation and promoting DNA methylation by DNMT1. Deubiquitinates alkylation repair enzyme ALKBH3. OTUD4 recruits USP7 and USP9X to stabilize ALKBH3, thereby promoting the repair of alkylated DNA lesions. Acts as a chromatin regulator via its association with the Polycomb group (PcG) multiprotein PRC1-like complex; may act by deubiquitinating components of the PRC1-like complex. Able to mediate deubiquitination of histone H2B; it is however unsure whether this activity takes place in vivo. Exhibits a preference towards 'Lys-48'-linked ubiquitin chains. Increases regulatory T-cells (Treg) suppressive capacity by deubiquitinating and stabilizing the transcription factor FOXP3 which is crucial for Treg cell function. Plays a role in the maintenance of the circadian clock periodicity via deubiquitination and stabilization of the CRY1 and CRY2 proteins. Deubiquitinates REST, thereby stabilizing REST and promoting the maintenance of neural progenitor cells. Deubiquitinates SIRT7, inhibiting SIRT7 histone deacetylase activity and regulating gluconeogenesis. Involved in the regulation of WASH-dependent actin polymerization at the surface of endosomes and the regulation of endosomal protein recycling. It maintains optimal WASH complex activity and precise F-actin levels via deubiquitination of TRIM27 and WASHC1. Mediates the deubiquitination of phosphorylated DEPTOR, promoting its stability and leading to decreased mTORC1 signaling. This is Ubiquitin carboxyl-terminal hydrolase 7 (Usp7) from Mus musculus (Mouse).